The sequence spans 315 residues: Phosphate transport system permease protein PstC (315 aa).

Topologically, residues 1–22 (MLTKSRKYFNQTWIESLFKQTT) are cytoplasmic. A helical transmembrane segment spans residues 23–43 (ALFALLVFILLAAILISLVIG). The Periplasmic portion of the chain corresponds to 44 to 77 (SWESIKRFGGSFLLETYWDPVQEQYGAIIPILGT). One can recognise an ABC transmembrane type-1 domain in the interval 74-302 (ILGTLITAGI…VITTMVLILS (229 aa)). A helical transmembrane segment spans residues 78–98 (LITAGIALFIAVPISFGIAIF). The Cytoplasmic segment spans residues 99 to 117 (LTELAPNWLKRPISIAIEM). The chain crosses the membrane as a helical span at residues 118 to 138 (LAAIPSIIYGMWGLFVFVPLF). Residues 139–164 (QEHIQPVLIDNLGNLPGLELFFSGVP) lie on the Periplasmic side of the membrane. The helical transmembrane segment at 165-185 (FGVGLFTAGLVLAIMIIPFIA) threads the bilayer. The Cytoplasmic segment spans residues 186–223 (SVMRDVFSIVPPMLKEGAYGLGATTWEVVRQVIVPHTR). A helical membrane pass occupies residues 224–244 (IGLVGSVMLGLGRALGETMAI). Residues 245–281 (TFIIGNSFQLPNSLFSPSTSIASAIANEFNEAGGLQK) are Periplasmic-facing. A helical membrane pass occupies residues 282 to 302 (SALMELGLLLFVITTMVLILS). Residues 303-315 (RLMITKMQQTKGK) lie on the Cytoplasmic side of the membrane.

The protein belongs to the binding-protein-dependent transport system permease family. CysTW subfamily.

The protein resides in the cell inner membrane. In terms of biological role, part of the binding-protein-dependent transport system for phosphate; probably responsible for the translocation of the substrate across the membrane. The protein is Phosphate transport system permease protein PstC (pstC) of Haemophilus influenzae (strain ATCC 51907 / DSM 11121 / KW20 / Rd).